The chain runs to 772 residues: PDZ domain-containing protein 4 (772 aa).

A PDZ domain is found at 136–221; sequence EVELCKNSHQ…NISLLVARPE (86 aa). The tract at residues 239-320 is disordered; the sequence is DFGSENEGDL…TNTPGSLRKF (82 aa). Ser-242 is subject to Phosphoserine. Residues 287-303 show a composition bias toward basic and acidic residues; it reads RTDESTRNEESSEHDLL. The stretch at 394 to 424 forms a coiled coil; that stretch reads VNRNESLGHEMAMLEEELRHLEFKCRNILRA. Residues 450–573 are disordered; the sequence is ASEPKKHELS…VGPEGSPYLS (124 aa). A compositionally biased stretch (basic and acidic residues) spans 452-472; sequence EPKKHELSDISELPEKSDKDS. Ser-459 bears the Phosphoserine mark. 2 stretches are compositionally biased toward polar residues: residues 473–484 and 502–511; these read TSAYNTGESCRS and AGNSNLNRTP. Residues 535–552 show a composition bias toward basic and acidic residues; that stretch reads LSRDPEVGRRQHTEERVR.

It localises to the cytoplasm. The protein localises to the cell cortex. The protein is PDZ domain-containing protein 4 (Pdzd4) of Mus musculus (Mouse).